A 250-amino-acid polypeptide reads, in one-letter code: 5'-nucleotidase SurE (250 aa).

A divalent metal cation is bound by residues D8, D9, S40, and N95.

Belongs to the SurE nucleotidase family. A divalent metal cation serves as cofactor.

The protein resides in the cytoplasm. The enzyme catalyses a ribonucleoside 5'-phosphate + H2O = a ribonucleoside + phosphate. Its function is as follows. Nucleotidase that shows phosphatase activity on nucleoside 5'-monophosphates. The protein is 5'-nucleotidase SurE of Nitratidesulfovibrio vulgaris (strain DP4) (Desulfovibrio vulgaris).